A 176-amino-acid polypeptide reads, in one-letter code: MRLFVAVDVDDSIREKVKPILKELSGVSGVKAVEPENLHITLLFLGEVGEEKLARIEERLSEVTFQPFKISFEGVGAFPNPGSPRVVWIGVKEEGELTRLANSVYEKLKKLGFRRDKDFKAHLTVGRVKRKNPEVADIVRKYSSESFGEMEVRDFRLKQSILTPKGPIYKDLRVFE.

Catalysis depends on histidine 39, which acts as the Proton donor. Short sequence motifs (HXTX) lie at residues 39-42 (HITL) and 122-125 (HLTV). Histidine 122 (proton acceptor) is an active-site residue.

It belongs to the 2H phosphoesterase superfamily. ThpR family.

It carries out the reaction a 3'-end 2',3'-cyclophospho-ribonucleotide-RNA + H2O = a 3'-end 2'-phospho-ribonucleotide-RNA + H(+). Functionally, hydrolyzes RNA 2',3'-cyclic phosphodiester to an RNA 2'-phosphomonoester. The polypeptide is RNA 2',3'-cyclic phosphodiesterase (Archaeoglobus fulgidus (strain ATCC 49558 / DSM 4304 / JCM 9628 / NBRC 100126 / VC-16)).